A 103-amino-acid polypeptide reads, in one-letter code: Putative membrane protein insertion efficiency factor (103 aa).

The protein belongs to the UPF0161 family.

The protein resides in the cell membrane. Functionally, could be involved in insertion of integral membrane proteins into the membrane. In Clavibacter michiganensis subsp. michiganensis (strain NCPPB 382), this protein is Putative membrane protein insertion efficiency factor.